A 370-amino-acid chain; its full sequence is Cyclic AMP-responsive element-binding protein 3-like protein 4 (370 aa).

Residues Met-1 to Asn-55 form a required for transcriptional activation region. At Met-1 to Ser-271 the chain is on the cytoplasmic side. A disordered region spans residues Glu-61–Pro-85. Positions Ser-76–Pro-85 are enriched in low complexity. In terms of domain architecture, bZIP spans Ile-193–Leu-256. Positions Lys-195–Lys-234 are basic motif. Residues Leu-235–Leu-256 form a leucine-zipper region. Residues Thr-272–Phe-292 traverse the membrane as a helical; Signal-anchor for type II membrane protein segment. The Lumenal segment spans residues Gln-293–Met-370. 2 N-linked (GlcNAc...) asparagine glycosylation sites follow: Asn-318 and Asn-342.

The protein belongs to the bZIP family. ATF subfamily. In terms of assembly, binds DNA as a dimer. Forms a heterodimer with CREM isoform Tau. Post-translationally, controlled by regulated intramembrane proteolysis (RIP). Following ER stress a fragment containing the cytoplasmic transcription factor domain is released by proteolysis. The cleavage seems to be performed sequentially by site-1 and site-2 proteases (PS1 and PS2). PS1 cleavage may be suppressed by a determinant in the C-terminal region. In terms of tissue distribution, predominantly expressed at high levels in testis with isoform 2 being the predominant isoform. Specifically expressed in postmeiotic spermatids and accumulates in the mid/late stage (at protein level). Ubiquitously expressed at low levels.

The protein resides in the endoplasmic reticulum membrane. Its subcellular location is the cytoplasmic vesicle. The protein localises to the secretory vesicle. It localises to the acrosome inner membrane. It is found in the nucleus. In terms of biological role, transcriptional activator that may play a role in the unfolded protein response of the testis. Proposed to be involved in spermiogenesis. May be involved in regulating the maturation of sperm head nuclei. Alternatively proposed to be a paternally delivered transcription factor that may function in early zygotic gene activation. Increases the binding of CREM isoform Tau with CRE. The CREM isoform Tau-CREB3L4 heterodimer functions through CRE but not through UPRE and may recruit HIRA to CRE to regulate histone exchange. This is Cyclic AMP-responsive element-binding protein 3-like protein 4 (Creb3l4) from Mus musculus (Mouse).